Here is a 225-residue protein sequence, read N- to C-terminus: Cytidylate kinase (225 aa).

Residue 11–19 participates in ATP binding; that stretch reads GPAAAGKST.

The protein belongs to the cytidylate kinase family. Type 1 subfamily.

It localises to the cytoplasm. It catalyses the reaction CMP + ATP = CDP + ADP. The enzyme catalyses dCMP + ATP = dCDP + ADP. In Bacillus cereus (strain B4264), this protein is Cytidylate kinase.